A 113-amino-acid chain; its full sequence is Endoribonuclease SymE (113 aa).

The SpoVT-AbrB domain occupies S29–P74.

It belongs to the SymE family.

Its subcellular location is the cytoplasm. Functionally, involved in the degradation and recycling of damaged RNA. It is itself a target for degradation by the ATP-dependent protease Lon. This Escherichia coli (strain K12 / MC4100 / BW2952) protein is Endoribonuclease SymE.